We begin with the raw amino-acid sequence, 278 residues long: Elongation factor Ts (278 aa).

Residues threonine 79–valine 82 form an involved in Mg(2+) ion dislocation from EF-Tu region.

Belongs to the EF-Ts family.

Its subcellular location is the cytoplasm. In terms of biological role, associates with the EF-Tu.GDP complex and induces the exchange of GDP to GTP. It remains bound to the aminoacyl-tRNA.EF-Tu.GTP complex up to the GTP hydrolysis stage on the ribosome. The sequence is that of Elongation factor Ts from Borrelia recurrentis (strain A1).